Here is a 552-residue protein sequence, read N- to C-terminus: Phosphoglucomutase (552 aa).

Ser143 (phosphoserine intermediate) is an active-site residue. Mg(2+) is bound by residues Ser143, Asp295, Asp297, and Asp299.

Belongs to the phosphohexose mutase family. The cofactor is Mg(2+).

The enzyme catalyses alpha-D-glucose 1-phosphate = alpha-D-glucose 6-phosphate. The protein operates within glycolipid metabolism; diglucosyl-diacylglycerol biosynthesis. In terms of biological role, catalyzes the interconversion between glucose-6-phosphate and alpha-glucose-1-phosphate. This is the first step in the biosynthesis of diglucosyl-diacylglycerol (Glc2-DAG), i.e. the predominant glycolipid found in the S.aureus membrane, which is also used as a membrane anchor for lipoteichoic acid (LTA). The sequence is that of Phosphoglucomutase (pgcA) from Staphylococcus aureus (strain MRSA252).